Consider the following 2280-residue polypeptide: Protein Ycf2 (2280 aa).

1631-1638 lines the ATP pocket; the sequence is GSIGTGRS.

This sequence belongs to the Ycf2 family.

The protein resides in the plastid. It localises to the chloroplast stroma. Probable ATPase of unknown function. Its presence in a non-photosynthetic plant (Epifagus virginiana) and experiments in tobacco indicate that it has an essential function which is probably not related to photosynthesis. This chain is Protein Ycf2, found in Nicotiana tomentosiformis (Tobacco).